A 639-amino-acid polypeptide reads, in one-letter code: UvrABC system protein C (639 aa).

Positions 31–109 (EQAGVYRMYD…IKKYQPKYNI (79 aa)) constitute a GIY-YIG domain. The UVR domain occupies 218-253 (SAVIEQLVARMELASNELHFELAAKYRDQIVTLRKV).

Belongs to the UvrC family. In terms of assembly, interacts with UvrB in an incision complex.

The protein localises to the cytoplasm. Functionally, the UvrABC repair system catalyzes the recognition and processing of DNA lesions. UvrC both incises the 5' and 3' sides of the lesion. The N-terminal half is responsible for the 3' incision and the C-terminal half is responsible for the 5' incision. The sequence is that of UvrABC system protein C from Colwellia psychrerythraea (strain 34H / ATCC BAA-681) (Vibrio psychroerythus).